The chain runs to 224 residues: Imidazole glycerol phosphate synthase subunit HisH (224 aa).

Positions 5–214 constitute a Glutamine amidotransferase type-1 domain; the sequence is DTIIIDTGCA…MKMNAGSFAG (210 aa). Cys-80 serves as the catalytic Nucleophile. Active-site residues include His-189 and Glu-191.

As to quaternary structure, heterodimer of HisH and HisF.

Its subcellular location is the cytoplasm. The enzyme catalyses 5-[(5-phospho-1-deoxy-D-ribulos-1-ylimino)methylamino]-1-(5-phospho-beta-D-ribosyl)imidazole-4-carboxamide + L-glutamine = D-erythro-1-(imidazol-4-yl)glycerol 3-phosphate + 5-amino-1-(5-phospho-beta-D-ribosyl)imidazole-4-carboxamide + L-glutamate + H(+). The catalysed reaction is L-glutamine + H2O = L-glutamate + NH4(+). Its pathway is amino-acid biosynthesis; L-histidine biosynthesis; L-histidine from 5-phospho-alpha-D-ribose 1-diphosphate: step 5/9. Its function is as follows. IGPS catalyzes the conversion of PRFAR and glutamine to IGP, AICAR and glutamate. The HisH subunit catalyzes the hydrolysis of glutamine to glutamate and ammonia as part of the synthesis of IGP and AICAR. The resulting ammonia molecule is channeled to the active site of HisF. This chain is Imidazole glycerol phosphate synthase subunit HisH, found in Shewanella loihica (strain ATCC BAA-1088 / PV-4).